A 304-amino-acid polypeptide reads, in one-letter code: Virulence protein VirA (304 aa).

Its function is as follows. Could be involved in the biosynthesis of a major surface antigen important for virulence. In Vibrio anguillarum (strain ATCC 68554 / 775) (Listonella anguillarum), this protein is Virulence protein VirA (virA).